The primary structure comprises 634 residues: Chaperone protein HtpG (634 aa).

Residues 1–342 (MSVETQKETL…SNDLSLNVSR (342 aa)) are a; substrate-binding. The tract at residues 343–559 (EILQKDPIID…EQDLGLQMRQ (217 aa)) is b. The segment at 560-634 (ILEASGQKVP…LNKLLVELSV (75 aa)) is c.

The protein belongs to the heat shock protein 90 family. In terms of assembly, homodimer.

It is found in the cytoplasm. In terms of biological role, molecular chaperone. Has ATPase activity. The chain is Chaperone protein HtpG from Pseudomonas fluorescens (strain ATCC BAA-477 / NRRL B-23932 / Pf-5).